Consider the following 95-residue polypeptide: Large ribosomal subunit protein bL25 (95 aa).

It belongs to the bacterial ribosomal protein bL25 family. Part of the 50S ribosomal subunit; part of the 5S rRNA/L5/L18/L25 subcomplex. Contacts the 5S rRNA. Binds to the 5S rRNA independently of L5 and L18.

In terms of biological role, this is one of the proteins that binds to the 5S RNA in the ribosome where it forms part of the central protuberance. The protein is Large ribosomal subunit protein bL25 of Glaesserella parasuis serovar 5 (strain SH0165) (Haemophilus parasuis).